Reading from the N-terminus, the 526-residue chain is Bifunctional purine biosynthesis protein PurH (526 aa).

An MGS-like domain is found at 1–147 (MPSIKRALIS…KNWKHVAIVT (147 aa)).

Belongs to the PurH family.

It catalyses the reaction (6R)-10-formyltetrahydrofolate + 5-amino-1-(5-phospho-beta-D-ribosyl)imidazole-4-carboxamide = 5-formamido-1-(5-phospho-D-ribosyl)imidazole-4-carboxamide + (6S)-5,6,7,8-tetrahydrofolate. The catalysed reaction is IMP + H2O = 5-formamido-1-(5-phospho-D-ribosyl)imidazole-4-carboxamide. It functions in the pathway purine metabolism; IMP biosynthesis via de novo pathway; 5-formamido-1-(5-phospho-D-ribosyl)imidazole-4-carboxamide from 5-amino-1-(5-phospho-D-ribosyl)imidazole-4-carboxamide (10-formyl THF route): step 1/1. Its pathway is purine metabolism; IMP biosynthesis via de novo pathway; IMP from 5-formamido-1-(5-phospho-D-ribosyl)imidazole-4-carboxamide: step 1/1. In Neisseria meningitidis serogroup C / serotype 2a (strain ATCC 700532 / DSM 15464 / FAM18), this protein is Bifunctional purine biosynthesis protein PurH.